Here is a 253-residue protein sequence, read N- to C-terminus: 5'-nucleotidase SurE (253 aa).

A divalent metal cation contacts are provided by Asp-8, Asp-9, Ser-39, and Asn-92.

It belongs to the SurE nucleotidase family. It depends on a divalent metal cation as a cofactor.

It localises to the cytoplasm. The catalysed reaction is a ribonucleoside 5'-phosphate + H2O = a ribonucleoside + phosphate. Its function is as follows. Nucleotidase that shows phosphatase activity on nucleoside 5'-monophosphates. In Burkholderia pseudomallei (strain 1710b), this protein is 5'-nucleotidase SurE.